The following is a 440-amino-acid chain: Xylose isomerase (440 aa).

Residues histidine 100 and aspartate 103 contribute to the active site. Mg(2+)-binding residues include glutamate 231, glutamate 267, histidine 270, aspartate 295, aspartate 306, aspartate 308, and aspartate 338.

It belongs to the xylose isomerase family. In terms of assembly, homotetramer. It depends on Mg(2+) as a cofactor.

It is found in the cytoplasm. The catalysed reaction is alpha-D-xylose = alpha-D-xylulofuranose. The protein is Xylose isomerase of Burkholderia vietnamiensis (strain G4 / LMG 22486) (Burkholderia cepacia (strain R1808)).